The chain runs to 1225 residues: Hyphally regulated cell wall protein 4 (1225 aa).

The signal sequence occupies residues 1–20; the sequence is MFSYSQAIRFIIFLLPICLT. N-linked (GlcNAc...) asparagine glycosylation is found at Asn97, Asn200, Asn488, Asn595, Asn634, and Asn694. The tract at residues 832 to 852 is disordered; the sequence is DLDLPDDTTFTPSQSSSTTVP. Residues 838–852 are compositionally biased toward low complexity; it reads DTTFTPSQSSSTTVP. Asn933 and Asn1035 each carry an N-linked (GlcNAc...) asparagine glycan. Positions 1049–1114 are disordered; that stretch reads AYTQQDASTQ…NSHFEGTFIS (66 aa). Residues Asn1133, Asn1150, Asn1182, and Asn1193 are each glycosylated (N-linked (GlcNAc...) asparagine). Residue Ser1195 is the site of GPI-anchor amidated serine attachment. A propeptide spans 1196-1225 (removed in mature form); that stretch reads GLISKSESVVLLIRPVMIFVFLAICVVIML.

It belongs to the HYR1/IFF family. Post-translationally, the GPI-anchor is attached to the protein in the endoplasmic reticulum and serves to target the protein to the cell surface. There, the glucosamine-inositol phospholipid moiety is cleaved off and the GPI-modified mannoprotein is covalently attached via its lipidless GPI glycan remnant to the 1,6-beta-glucan of the outer cell wall layer.

It localises to the secreted. The protein resides in the cell wall. The protein localises to the membrane. In terms of biological role, GPI-anchored cell wall protein involved in cell wall organization, hyphal growth, as well as in host-fungal interaction and virulence. In Candida albicans (strain SC5314 / ATCC MYA-2876) (Yeast), this protein is Hyphally regulated cell wall protein 4 (HYR4).